Consider the following 803-residue polypeptide: Cation channel sperm-associated auxiliary subunit delta (803 aa).

The signal sequence occupies residues 1-15; the sequence is MLMLMLAAVATVVRA. Topologically, residues 16-720 are extracellular; the sequence is QTVCRFRTVR…ALPVAEFRPM (705 aa). Cystine bridges form between Cys19/Cys365, Cys55/Cys142, Cys141/Cys148, Cys383/Cys492, Cys506/Cys698, Cys521/Cys568, and Cys620/Cys648. 7 N-linked (GlcNAc...) asparagine glycosylation sites follow: Asn226, Asn418, Asn436, Asn468, Asn534, Asn545, and Asn626. A helical transmembrane segment spans residues 721–742; that stretch reads TSILLMVTVTLFTMWLAYAIPK. Topologically, residues 743 to 803 are cytoplasmic; that stretch reads QLRTERGRRL…QIGKKPDIKK (61 aa). Positions 782 to 803 are disordered; the sequence is SRRVKDQPEKIPQIGKKPDIKK.

The protein belongs to the CATSPERD family. Component of the CatSper complex or CatSpermasome composed of the core pore-forming members CATSPER1, CATSPER2, CATSPER3 and CATSPER4 as well as auxiliary members CATSPERB, CATSPERG, CATSPERD, CATSPERE, CATSPERZ, C2CD6/CATSPERT, SLCO6C1, TMEM249, TMEM262 and EFCAB9. HSPA1 may be an additional auxiliary complex member. The core complex members CATSPER1, CATSPER2, CATSPER3 and CATSPER4 form a heterotetrameric channel. The auxiliary CATSPERB, CATSPERG, CATSPERD and CATSPERE subunits form a pavilion-like structure over the pore which stabilizes the complex through interactions with CATSPER4, CATSPER3, CATSPER1 and CATSPER2 respectively. SLCO6C1 interacts with CATSPERE and TMEM262/CATSPERH interacts with CATSPERB, further stabilizing the complex. C2CD6/CATSPERT interacts at least with CATSPERD and is required for targeting the CatSper complex in the flagellar membrane.

Its subcellular location is the cell projection. The protein localises to the cilium. It localises to the flagellum membrane. In terms of biological role, auxiliary component of the CatSper complex, a complex involved in sperm cell hyperactivation. Sperm cell hyperactivation is needed for sperm motility which is essential late in the preparation of sperm for fertilization. Required for CATSPER1 stability before intraflagellar transport and/or incorporation of the CatSper complex channel into the flagellar membrane. This Rattus norvegicus (Rat) protein is Cation channel sperm-associated auxiliary subunit delta.